Consider the following 549-residue polypeptide: Cytoplasmic trehalase (549 aa).

Residues Arg168, 175–176, Asn212, 221–223, 292–294, and Gly324 each bind substrate; these read WD, RSQ, and RDE. Catalysis depends on proton donor/acceptor residues Asp326 and Glu509. Substrate is bound at residue Glu525.

It belongs to the glycosyl hydrolase 37 family. In terms of assembly, monomer.

The protein localises to the cytoplasm. The enzyme catalyses alpha,alpha-trehalose + H2O = alpha-D-glucose + beta-D-glucose. It functions in the pathway glycan degradation; trehalose degradation; D-glucose from alpha,alpha-trehalose: step 1/1. In terms of biological role, hydrolyzes trehalose to glucose. Could be involved, in cells returning to low osmolarity conditions, in the utilization of the accumulated cytoplasmic trehalose, which was synthesized in response to high osmolarity. The sequence is that of Cytoplasmic trehalase from Shigella boydii serotype 4 (strain Sb227).